The following is a 79-amino-acid chain: Small ribosomal subunit protein bS18 (79 aa).

Belongs to the bacterial ribosomal protein bS18 family. In terms of assembly, part of the 30S ribosomal subunit. Forms a tight heterodimer with protein bS6.

Functionally, binds as a heterodimer with protein bS6 to the central domain of the 16S rRNA, where it helps stabilize the platform of the 30S subunit. This chain is Small ribosomal subunit protein bS18, found in Nitrobacter hamburgensis (strain DSM 10229 / NCIMB 13809 / X14).